The sequence spans 921 residues: Eukaryotic translation initiation factor 3 subunit A (921 aa).

The region spanning 319–493 (FKFYASQLVL…GVVSFMEDPF (175 aa)) is the PCI domain. Residues 497 to 524 (GGSTATNADDEQRNDDGYEETHVEEEPE) form a disordered region. Over residues 506–517 (DEQRNDDGYEET) the composition is skewed to basic and acidic residues. Coiled-coil stretches lie at residues 562 to 647 (ARNE…NEKT) and 693 to 868 (ERMS…IKRN). Residues 818–865 (AAKEHDDRQRMLQDRLTKERKERERVNKEKDEAARKQREIEEAVERTI) show a composition bias toward basic and acidic residues. The interval 818–921 (AAKEHDDRQR…KMKLRRAGRA (104 aa)) is disordered. Over residues 873 to 890 (PAPPVRSAPPARAAPPPR) the composition is skewed to pro residues. A compositionally biased stretch (basic and acidic residues) spans 903-913 (PEKKLTYAEKM).

The protein belongs to the eIF-3 subunit A family. In terms of assembly, component of the eukaryotic translation initiation factor 3 (eIF-3) complex.

It localises to the cytoplasm. Its function is as follows. RNA-binding component of the eukaryotic translation initiation factor 3 (eIF-3) complex, which is involved in protein synthesis of a specialized repertoire of mRNAs and, together with other initiation factors, stimulates binding of mRNA and methionyl-tRNAi to the 40S ribosome. The eIF-3 complex specifically targets and initiates translation of a subset of mRNAs involved in cell proliferation. The polypeptide is Eukaryotic translation initiation factor 3 subunit A (Eremothecium gossypii (strain ATCC 10895 / CBS 109.51 / FGSC 9923 / NRRL Y-1056) (Yeast)).